The primary structure comprises 249 residues: RNA polymerase sigma factor SigI3 (249 aa).

Positions 60–73 (EEFSIGLAAFNEAI) match the Polymerase core binding motif. The H-T-H motif DNA-binding region spans 199–218 (MKEVLSRIKVNHKTIQRNRK).

The protein belongs to the sigma-70 factor family. SigI subfamily. In terms of assembly, interacts with RsgI3.

The protein resides in the cytoplasm. Its activity is regulated as follows. Negatively regulated by the anti-sigma-I factor RsgI3. Binding of the polysaccharide substrate to RsgI3 may lead to the release and activation of SigI3. In terms of biological role, sigma factors are initiation factors that promote the attachment of RNA polymerase to specific initiation sites and are then released. This sigma factor is involved in regulation of cellulosomal genes via an external polysaccharide-sensing mechanism. Recognizes the predicted promoters associated with sigI3 itself, pl11, ce12 and cipA. This Acetivibrio thermocellus (strain ATCC 27405 / DSM 1237 / JCM 9322 / NBRC 103400 / NCIMB 10682 / NRRL B-4536 / VPI 7372) (Clostridium thermocellum) protein is RNA polymerase sigma factor SigI3.